We begin with the raw amino-acid sequence, 97 residues long: Protein Vpr (97 aa).

Residues 1 to 42 (MEQAPEDQGPQREPYNEWTLELLEELKREAVRHFPRPWLHSL) form a homooligomerization region. Phosphoserine; by host is present on residues S79, S95, and S97.

Belongs to the HIV-1 VPR protein family. As to quaternary structure, homooligomer, may form homodimer. Interacts with p6-gag region of the Pr55 Gag precursor protein through a (Leu-X-X)4 motif near the C-terminus of the P6gag protein. Interacts with host UNG. May interact with host RAD23A/HHR23A. Interacts with host VPRBP/DCAF1, leading to hijack the CUL4A-RBX1-DDB1-DCAF1/VPRBP complex, mediating ubiquitination of host proteins such as TERT and ZGPAT and arrest of the cell cycle in G2 phase. In terms of processing, phosphorylated on several residues by host. These phosphorylations regulate VPR activity for the nuclear import of the HIV-1 pre-integration complex.

The protein localises to the virion. Its subcellular location is the host nucleus. It is found in the host extracellular space. During virus replication, may deplete host UNG protein, and incude G2-M cell cycle arrest. Acts by targeting specific host proteins for degradation by the 26S proteasome, through association with the cellular CUL4A-DDB1 E3 ligase complex by direct interaction with host VPRPB/DCAF-1. Cell cycle arrest reportedly occurs within hours of infection and is not blocked by antiviral agents, suggesting that it is initiated by the VPR carried into the virion. Additionally, VPR induces apoptosis in a cell cycle dependent manner suggesting that these two effects are mechanistically linked. Detected in the serum and cerebrospinal fluid of AIDS patient, VPR may also induce cell death to bystander cells. Functionally, during virus entry, plays a role in the transport of the viral pre-integration (PIC) complex to the host nucleus. This function is crucial for viral infection of non-dividing macrophages. May act directly at the nuclear pore complex, by binding nucleoporins phenylalanine-glycine (FG)-repeat regions. This chain is Protein Vpr, found in Human immunodeficiency virus type 1 group M subtype B (isolate ARV2/SF2) (HIV-1).